The following is a 66-amino-acid chain: Cell division protein ZapB (66 aa).

Residues 3-59 adopt a coiled-coil conformation; the sequence is LELLSQLETKIQATLENIELLKMELEEEKQKSTQLAEKNQKLQQDLNSWSDKVNGLV.

Belongs to the ZapB family. Homodimer. The ends of the coiled-coil dimer bind to each other, forming polymers. Interacts with FtsZ.

It localises to the cytoplasm. Its function is as follows. Non-essential, abundant cell division factor that is required for proper Z-ring formation. It is recruited early to the divisome by direct interaction with FtsZ, stimulating Z-ring assembly and thereby promoting cell division earlier in the cell cycle. Its recruitment to the Z-ring requires functional FtsA or ZipA. This chain is Cell division protein ZapB, found in Shewanella denitrificans (strain OS217 / ATCC BAA-1090 / DSM 15013).